The chain runs to 203 residues: GTP-binding protein YPTC1 (203 aa).

Residues 15 to 23 (GDSGVGKSC), 33 to 40 (YTESYIST), 63 to 67 (DTAGQ), 121 to 124 (NKSD), and 151 to 153 (SAK) contribute to the GTP site. The Effector region signature appears at 37–45 (YISTIGVDF). Residues 174–203 (ASQPIPTKAGGPVVRPQEGKPINSKSSSCC) are disordered. S-geranylgeranyl cysteine attachment occurs at residues Cys-202 and Cys-203.

This sequence belongs to the small GTPase superfamily. Rab family.

Its subcellular location is the cell membrane. Its function is as follows. Protein transport. Probably involved in vesicular traffic. This Chlamydomonas reinhardtii (Chlamydomonas smithii) protein is GTP-binding protein YPTC1 (YPTC1).